The following is a 230-amino-acid chain: DNA repair protein RecO (230 aa).

It belongs to the RecO family.

Its function is as follows. Involved in DNA repair and RecF pathway recombination. The sequence is that of DNA repair protein RecO from Pseudoalteromonas translucida (strain TAC 125).